Here is a 278-residue protein sequence, read N- to C-terminus: Large ribosomal subunit protein uL2 (278 aa).

A disordered region spans residues 222–278 (GVVMNPIDHPHGGGEGRTSGGRHPVTPWGKPTKGKKTRSNKSTDKFILISRHKRKKK).

This sequence belongs to the universal ribosomal protein uL2 family. Part of the 50S ribosomal subunit. Forms a bridge to the 30S subunit in the 70S ribosome.

In terms of biological role, one of the primary rRNA binding proteins. Required for association of the 30S and 50S subunits to form the 70S ribosome, for tRNA binding and peptide bond formation. It has been suggested to have peptidyltransferase activity; this is somewhat controversial. Makes several contacts with the 16S rRNA in the 70S ribosome. This is Large ribosomal subunit protein uL2 from Rhodopseudomonas palustris (strain ATCC BAA-98 / CGA009).